Here is a 1405-residue protein sequence, read N- to C-terminus: DNA-directed RNA polymerase III subunit rpc1 (1405 aa).

7 residues coordinate Zn(2+): cysteine 66, cysteine 69, cysteine 76, histidine 79, cysteine 106, cysteine 109, and cysteine 153. 3 residues coordinate Mg(2+): aspartate 493, aspartate 495, and aspartate 497. The interval 838–850 (PTEFLFHAISGRE) is bridging helix.

This sequence belongs to the RNA polymerase beta' chain family. As to quaternary structure, component of the RNA polymerase III (Pol III) complex consisting of 17 subunits.

The protein resides in the nucleus. It carries out the reaction RNA(n) + a ribonucleoside 5'-triphosphate = RNA(n+1) + diphosphate. Its function is as follows. DNA-dependent RNA polymerase catalyzes the transcription of DNA into RNA using the four ribonucleoside triphosphates as substrates. Largest and catalytic core component of RNA polymerase III which synthesizes small RNAs, such as 5S rRNA and tRNAs. Forms the polymerase active center together with the second largest subunit. A single-stranded DNA template strand of the promoter is positioned within the central active site cleft of Pol III. A bridging helix emanates from RPC1 and crosses the cleft near the catalytic site and is thought to promote translocation of Pol III by acting as a ratchet that moves the RNA-DNA hybrid through the active site by switching from straight to bent conformations at each step of nucleotide addition. In Schizosaccharomyces pombe (strain 972 / ATCC 24843) (Fission yeast), this protein is DNA-directed RNA polymerase III subunit rpc1 (rpc1).